Here is a 484-residue protein sequence, read N- to C-terminus: Toluene efflux pump outer membrane protein TtgC (484 aa).

The N-terminal stretch at 1-17 (MTKSLLSLAVTAFILGG) is a signal peptide. Cys-18 is lipidated: N-palmitoyl cysteine. Cys-18 carries S-diacylglycerol cysteine lipidation.

The protein belongs to the outer membrane factor (OMF) (TC 1.B.17) family.

It localises to the cell outer membrane. Functionally, the outer membrane component of a constitutive organic solvent efflux system. Is involved in export of toluene, styrene, m-xylene, propylbenzene and ethylbenzene. Also exports AMP and the antibiotics carbenicillin, nalidixic acid, chloramphenicol and tetracycline. The sequence is that of Toluene efflux pump outer membrane protein TtgC (ttgC) from Pseudomonas putida (strain DOT-T1E).